The primary structure comprises 227 residues: Uracil-DNA glycosylase (227 aa).

Asp-65 serves as the catalytic Proton acceptor.

Belongs to the uracil-DNA glycosylase (UDG) superfamily. UNG family.

The protein resides in the cytoplasm. The enzyme catalyses Hydrolyzes single-stranded DNA or mismatched double-stranded DNA and polynucleotides, releasing free uracil.. Its function is as follows. Excises uracil residues from the DNA which can arise as a result of misincorporation of dUMP residues by DNA polymerase or due to deamination of cytosine. The protein is Uracil-DNA glycosylase of Bacillus velezensis (strain DSM 23117 / BGSC 10A6 / LMG 26770 / FZB42) (Bacillus amyloliquefaciens subsp. plantarum).